Here is a 235-residue protein sequence, read N- to C-terminus: Large ribosomal subunit protein uL1 (235 aa).

The protein belongs to the universal ribosomal protein uL1 family. As to quaternary structure, part of the 50S ribosomal subunit.

Functionally, binds directly to 23S rRNA. The L1 stalk is quite mobile in the ribosome, and is involved in E site tRNA release. In terms of biological role, protein L1 is also a translational repressor protein, it controls the translation of the L11 operon by binding to its mRNA. The polypeptide is Large ribosomal subunit protein uL1 (Mycobacterium leprae (strain Br4923)).